We begin with the raw amino-acid sequence, 253 residues long: 7-carboxy-7-deazaguanine synthase (253 aa).

Substrate is bound by residues 12–14 (WQG) and R32. The Radical SAM core domain occupies 23–253 (AFGRRQIFVR…FQVHKYLNVL (231 aa)). Positions 36, 40, and 43 each coordinate [4Fe-4S] cluster. S45 is a binding site for Mg(2+). T98 contributes to the substrate binding site. G100 provides a ligand contact to S-adenosyl-L-methionine.

This sequence belongs to the radical SAM superfamily. 7-carboxy-7-deazaguanine synthase family. As to quaternary structure, homodimer. Requires [4Fe-4S] cluster as cofactor. S-adenosyl-L-methionine is required as a cofactor. The cofactor is Mg(2+).

The enzyme catalyses 6-carboxy-5,6,7,8-tetrahydropterin + H(+) = 7-carboxy-7-deazaguanine + NH4(+). Its pathway is purine metabolism; 7-cyano-7-deazaguanine biosynthesis. Its function is as follows. Catalyzes the complex heterocyclic radical-mediated conversion of 6-carboxy-5,6,7,8-tetrahydropterin (CPH4) to 7-carboxy-7-deazaguanine (CDG), a step common to the biosynthetic pathways of all 7-deazapurine-containing compounds. This Thermococcus kodakarensis (strain ATCC BAA-918 / JCM 12380 / KOD1) (Pyrococcus kodakaraensis (strain KOD1)) protein is 7-carboxy-7-deazaguanine synthase.